A 337-amino-acid chain; its full sequence is Manganese-dependent ADP-ribose/CDP-alcohol diphosphatase (337 aa).

An N-acetylmethionine modification is found at methionine 1. The Zn(2+) site is built by aspartate 25, glutamine 27, aspartate 74, asparagine 110, histidine 241, histidine 278, and histidine 280.

This sequence belongs to the ADPRibase-Mn family. Monomer. It depends on Mg(2+) as a cofactor.

It catalyses the reaction CDP-choline + H2O = phosphocholine + CMP + 2 H(+). The enzyme catalyses ADP-D-ribose + H2O = D-ribose 5-phosphate + AMP + 2 H(+). The catalysed reaction is CDP-glycerol + H2O = sn-glycerol 3-phosphate + CMP + 2 H(+). Hydrolyzes ADP-ribose, IDP-ribose, CDP-glycerol, CDP-choline and CDP-ethanolamine, but not other non-reducing ADP-sugars or CDP-glucose. May be involved in immune cell signaling as suggested by the second-messenger role of ADP-ribose, which activates TRPM2 as a mediator of oxidative/nitrosative stress. This is Manganese-dependent ADP-ribose/CDP-alcohol diphosphatase (ADPRM) from Bos taurus (Bovine).